A 398-amino-acid polypeptide reads, in one-letter code: Leucine aminopeptidase 1 (398 aa).

An N-terminal signal peptide occupies residues 1-20 (MKFLQTSLIAAALPAALVSG). Residues 21–87 (RFVIENEGDN…LRAWTQSQAS (67 aa)) constitute a propeptide that is removed on maturation. An N-linked (GlcNAc...) asparagine glycan is attached at Asn179. 4 residues coordinate Zn(2+): His187, Asp206, Glu245, and Asp272. Cys321 and Cys325 are oxidised to a cystine. His354 serves as a coordination point for Zn(2+).

It belongs to the peptidase M28 family. M28E subfamily. As to quaternary structure, monomer. Zn(2+) is required as a cofactor.

The protein resides in the secreted. In terms of biological role, extracellular aminopeptidase that allows assimilation of proteinaceous substrates. This Trichoderma harzianum (Hypocrea lixii) protein is Leucine aminopeptidase 1 (lap1).